The following is a 364-amino-acid chain: D-alanine--D-alanine ligase (364 aa).

Residues 134 to 344 (KVLLKSFNIP…YESLVDKLIT (211 aa)) enclose the ATP-grasp domain. 167–222 (NNKLNYPVIVKPSVLGSSIGINVAYNVSQIEKYIEEAFEYDLTVVVEKFIKAREIE) is a binding site for ATP. Residues Asp-297, Glu-311, and Asn-313 each contribute to the Mg(2+) site.

This sequence belongs to the D-alanine--D-alanine ligase family. It depends on Mg(2+) as a cofactor. Mn(2+) serves as cofactor.

It is found in the cytoplasm. It catalyses the reaction 2 D-alanine + ATP = D-alanyl-D-alanine + ADP + phosphate + H(+). It functions in the pathway cell wall biogenesis; peptidoglycan biosynthesis. In terms of biological role, cell wall formation. In Borrelia recurrentis (strain A1), this protein is D-alanine--D-alanine ligase.